The primary structure comprises 370 residues: tRNA-specific 2-thiouridylase MnmA (370 aa).

Residues 25–32 and L51 contribute to the ATP site; that span reads ALSGGVDS. The active-site Nucleophile is C112. C112 and C211 form a disulfide bridge. An ATP-binding site is contributed by G137. Residues 161–163 are interaction with tRNA; that stretch reads KDQ. C211 acts as the Cysteine persulfide intermediate in catalysis. Residues 316-317 form an interaction with tRNA region; that stretch reads RY.

The protein belongs to the MnmA/TRMU family.

It localises to the cytoplasm. It catalyses the reaction S-sulfanyl-L-cysteinyl-[protein] + uridine(34) in tRNA + AH2 + ATP = 2-thiouridine(34) in tRNA + L-cysteinyl-[protein] + A + AMP + diphosphate + H(+). Functionally, catalyzes the 2-thiolation of uridine at the wobble position (U34) of tRNA, leading to the formation of s(2)U34. This Synechococcus sp. (strain JA-3-3Ab) (Cyanobacteria bacterium Yellowstone A-Prime) protein is tRNA-specific 2-thiouridylase MnmA.